The sequence spans 545 residues: Probable protein kinase UbiB (545 aa).

The Protein kinase domain maps to 124–502 (DFDETPLASA…RRSQGLARFY (379 aa)). ATP-binding positions include 130–138 (LASASIAQV) and K153. The Proton acceptor role is filled by D288. 2 helical membrane-spanning segments follow: residues 498–517 (LARF…AILF) and 521–540 (VETI…LLGW).

This sequence belongs to the ABC1 family. UbiB subfamily.

Its subcellular location is the cell inner membrane. It functions in the pathway cofactor biosynthesis; ubiquinone biosynthesis [regulation]. Is probably a protein kinase regulator of UbiI activity which is involved in aerobic coenzyme Q (ubiquinone) biosynthesis. This Photobacterium profundum (strain SS9) protein is Probable protein kinase UbiB.